The chain runs to 221 residues: Transcription repressor OFP8 (221 aa).

The segment covering 124–138 (EDEGDKEESEDDDSD) has biased composition (acidic residues). The tract at residues 124–147 (EDEGDKEESEDDDSDTLFSSRSFS) is disordered. The region spanning 158-217 (VVKKSKDPYEDFRTSMVEMIVERQIFAPAELQQLLQCFLSLNSRQHHKVIVQVFLEIYAT) is the OVATE domain.

As to expression, expressed in roots, rosette and cauline leaves, shoots, stems, flower buds and siliques.

It is found in the nucleus. Functionally, transcriptional repressor that regulates multiple aspects of plant growth and development through the regulation of BEL1-LIKE (BLH) and KNOX TALE (KNAT) homeodomain transcription factors. The polypeptide is Transcription repressor OFP8 (OFP8) (Arabidopsis thaliana (Mouse-ear cress)).